The primary structure comprises 256 residues: Hydroxyacylglutathione hydrolase (256 aa).

Residues His57, His59, Asp61, His62, His115, Asp134, and His172 each coordinate Zn(2+).

Belongs to the metallo-beta-lactamase superfamily. Glyoxalase II family. In terms of assembly, monomer. The cofactor is Zn(2+).

It catalyses the reaction an S-(2-hydroxyacyl)glutathione + H2O = a 2-hydroxy carboxylate + glutathione + H(+). It participates in secondary metabolite metabolism; methylglyoxal degradation; (R)-lactate from methylglyoxal: step 2/2. Functionally, thiolesterase that catalyzes the hydrolysis of S-D-lactoyl-glutathione to form glutathione and D-lactic acid. The sequence is that of Hydroxyacylglutathione hydrolase from Rhodospirillum rubrum (strain ATCC 11170 / ATH 1.1.1 / DSM 467 / LMG 4362 / NCIMB 8255 / S1).